The primary structure comprises 586 residues: Aspartate--tRNA ligase (586 aa).

Glu171 is an L-aspartate binding site. Residues 195-198 are aspartate; the sequence is QLFK. Residue Arg217 coordinates L-aspartate. ATP contacts are provided by residues 217-219 and Gln226; that span reads RDE. His448 contributes to the L-aspartate binding site. An ATP-binding site is contributed by Glu482. Arg489 contributes to the L-aspartate binding site. Residue 534 to 537 coordinates ATP; sequence GLDR.

Belongs to the class-II aminoacyl-tRNA synthetase family. Type 1 subfamily. In terms of assembly, homodimer.

The protein localises to the cytoplasm. It carries out the reaction tRNA(Asp) + L-aspartate + ATP = L-aspartyl-tRNA(Asp) + AMP + diphosphate. Its function is as follows. Catalyzes the attachment of L-aspartate to tRNA(Asp) in a two-step reaction: L-aspartate is first activated by ATP to form Asp-AMP and then transferred to the acceptor end of tRNA(Asp). The protein is Aspartate--tRNA ligase of Buchnera aphidicola subsp. Acyrthosiphon pisum (strain APS) (Acyrthosiphon pisum symbiotic bacterium).